A 393-amino-acid polypeptide reads, in one-letter code: ATP phosphoribosyltransferase regulatory subunit (393 aa).

Belongs to the class-II aminoacyl-tRNA synthetase family. HisZ subfamily. As to quaternary structure, heteromultimer composed of HisG and HisZ subunits.

The protein resides in the cytoplasm. It participates in amino-acid biosynthesis; L-histidine biosynthesis; L-histidine from 5-phospho-alpha-D-ribose 1-diphosphate: step 1/9. Its function is as follows. Required for the first step of histidine biosynthesis. May allow the feedback regulation of ATP phosphoribosyltransferase activity by histidine. The polypeptide is ATP phosphoribosyltransferase regulatory subunit (Nitrosospira multiformis (strain ATCC 25196 / NCIMB 11849 / C 71)).